The following is a 274-amino-acid chain: Large ribosomal subunit protein uL2 (274 aa).

Residues 225 to 274 form a disordered region; the sequence is MNPVDHPHGGGEGRSPIGRHPVTPWGKPTLGVKTRKKNKASSKLIIKRRK. Over residues 257–274 the composition is skewed to basic residues; it reads KTRKKNKASSKLIIKRRK.

Belongs to the universal ribosomal protein uL2 family. In terms of assembly, part of the 50S ribosomal subunit. Forms a bridge to the 30S subunit in the 70S ribosome.

One of the primary rRNA binding proteins. Required for association of the 30S and 50S subunits to form the 70S ribosome, for tRNA binding and peptide bond formation. It has been suggested to have peptidyltransferase activity; this is somewhat controversial. Makes several contacts with the 16S rRNA in the 70S ribosome. The protein is Large ribosomal subunit protein uL2 of Carboxydothermus hydrogenoformans (strain ATCC BAA-161 / DSM 6008 / Z-2901).